We begin with the raw amino-acid sequence, 305 residues long: Deoxyhypusine hydroxylase (305 aa).

HEAT-like PBS-type repeat units follow at residues 54–80 (LKHE…VLKD) and 87–113 (VRHE…YAED). Positions 56, 89, and 90 each coordinate Fe cation. The disordered stretch occupies residues 137–160 (EQTKDGTDENPYCSVDPAPPAQRK). 3 HEAT-like PBS-type repeats span residues 178 to 204 (DRYR…GLQC), 209 to 235 (FRHE…ALEK), and 242 to 268 (VRHE…YRKD). 3 residues coordinate Fe cation: His-211, His-244, and Glu-245.

The protein belongs to the deoxyhypusine hydroxylase family. Fe(2+) serves as cofactor.

The enzyme catalyses [eIF5A protein]-deoxyhypusine + AH2 + O2 = [eIF5A protein]-hypusine + A + H2O. The protein operates within protein modification; eIF5A hypusination. Functionally, catalyzes the hydroxylation of the N(6)-(4-aminobutyl)-L-lysine intermediate produced by deoxyhypusine synthase/DHPS on a critical lysine of the eukaryotic translation initiation factor 5A/eIF-5A. This is the second step of the post-translational modification of that lysine into an unusual amino acid residue named hypusine. Hypusination is unique to mature eIF-5A factor and is essential for its function. The protein is Deoxyhypusine hydroxylase (dohh) of Danio rerio (Zebrafish).